The sequence spans 301 residues: Eukaryotic translation initiation factor 3 subunit F (301 aa).

The MPN domain occupies 32-169 (VHVHPVALFS…IKSYISSPLG (138 aa)).

It belongs to the eIF-3 subunit F family. As to quaternary structure, component of the eukaryotic translation initiation factor 3 (eIF-3) complex.

Its subcellular location is the cytoplasm. Its function is as follows. Component of the eukaryotic translation initiation factor 3 (eIF-3) complex, which is involved in protein synthesis of a specialized repertoire of mRNAs and, together with other initiation factors, stimulates binding of mRNA and methionyl-tRNAi to the 40S ribosome. The eIF-3 complex specifically targets and initiates translation of a subset of mRNAs involved in cell proliferation. This Mycosarcoma maydis (Corn smut fungus) protein is Eukaryotic translation initiation factor 3 subunit F.